A 123-amino-acid polypeptide reads, in one-letter code: Large ribosomal subunit protein uL14c (123 aa).

This sequence belongs to the universal ribosomal protein uL14 family. Part of the 50S ribosomal subunit. Interacts with IOJAP.

The protein localises to the plastid. It is found in the chloroplast. Functionally, binds to 23S rRNA. This chain is Large ribosomal subunit protein uL14c, found in Zea mays (Maize).